The sequence spans 374 residues: Flap endonuclease 1 (374 aa).

The interval 1-105 is N-domain; it reads MGIKGLTALI…ELLQKRFGRR (105 aa). A Mg(2+)-binding site is contributed by D34. Residues R47 and R71 each contribute to the DNA site. Residue D87 coordinates Mg(2+). The tract at residues 103 to 122 is disordered; sequence GRREEAREQEEEQKDVADAE. The tract at residues 123 to 254 is I-domain; that stretch reads KMDQLARRQV…KTALKLIREH (132 aa). Residues E159, E161, D180, and D182 each coordinate Mg(2+). A DNA-binding site is contributed by E159. Positions 232 and 234 each coordinate DNA. A Mg(2+)-binding site is contributed by D234. The tract at residues 335–374 is disordered; that stretch reads SLSQKQQGRLDGFFTVKPGSAPPKRKAEDDKKNVKKKGKK. Residues 340–348 form an interaction with PCNA region; that stretch reads QQGRLDGFF.

The protein belongs to the XPG/RAD2 endonuclease family. FEN1 subfamily. Interacts with PCNA. Three molecules of FEN1 bind to one PCNA trimer with each molecule binding to one PCNA monomer. PCNA stimulates the nuclease activity without altering cleavage specificity. The cofactor is Mg(2+). In terms of processing, phosphorylated. Phosphorylation upon DNA damage induces relocalization to the nuclear plasma.

The protein localises to the nucleus. It localises to the nucleolus. It is found in the nucleoplasm. Its subcellular location is the mitochondrion. Its function is as follows. Structure-specific nuclease with 5'-flap endonuclease and 5'-3' exonuclease activities involved in DNA replication and repair. During DNA replication, cleaves the 5'-overhanging flap structure that is generated by displacement synthesis when DNA polymerase encounters the 5'-end of a downstream Okazaki fragment. It enters the flap from the 5'-end and then tracks to cleave the flap base, leaving a nick for ligation. Also involved in the long patch base excision repair (LP-BER) pathway, by cleaving within the apurinic/apyrimidinic (AP) site-terminated flap. Acts as a genome stabilization factor that prevents flaps from equilibrating into structures that lead to duplications and deletions. Also possesses 5'-3' exonuclease activity on nicked or gapped double-stranded DNA, and exhibits RNase H activity. Also involved in replication and repair of rDNA and in repairing mitochondrial DNA. This is Flap endonuclease 1 from Mycosarcoma maydis (Corn smut fungus).